Consider the following 296-residue polypeptide: Cytidine deaminase (296 aa).

2 consecutive CMP/dCMP-type deaminase domains span residues 47–167 and 186–296; these read ELNE…FGPS and DSND…VEPE. 88–90 provides a ligand contact to substrate; sequence NIE. H101 serves as a coordination point for Zn(2+). E103 functions as the Proton donor in the catalytic mechanism. 2 residues coordinate Zn(2+): C128 and C131.

Belongs to the cytidine and deoxycytidylate deaminase family. As to quaternary structure, homodimer. Zn(2+) serves as cofactor.

The catalysed reaction is cytidine + H2O + H(+) = uridine + NH4(+). It catalyses the reaction 2'-deoxycytidine + H2O + H(+) = 2'-deoxyuridine + NH4(+). This enzyme scavenges exogenous and endogenous cytidine and 2'-deoxycytidine for UMP synthesis. This is Cytidine deaminase from Shewanella halifaxensis (strain HAW-EB4).